Consider the following 806-residue polypeptide: DEP domain-containing protein 1A (806 aa).

Positions 24–108 (FRAAMPLRKH…DNNSLYRFPS (85 aa)) constitute a DEP domain. The tract at residues 142–177 (QFSKKTPKRRASVDSKEEQENEDLMEDQRNDDDFPK) is disordered. The span at 167–177 (EDQRNDDDFPK) shows a compositional bias: basic and acidic residues. The region spanning 279-319 (DYFLNLPEPLLTFEFYELFVNILVVCGYITVPNSHNGKHRF) is the Rho-GAP domain. A disordered region spans residues 564–588 (SHSSFPSTSSLLPPTTSPNSTGSES).

The protein is DEP domain-containing protein 1A (depdc1a) of Xenopus laevis (African clawed frog).